The sequence spans 133 residues: Small ribosomal subunit protein uS9 (133 aa).

Residues 97–113 (SKQELKSHGFLTRDPRK) are compositionally biased toward basic and acidic residues. Residues 97–133 (SKQELKSHGFLTRDPRKKERKKYGHKKARKSFQFSKR) are disordered. Positions 114-133 (KERKKYGHKKARKSFQFSKR) are enriched in basic residues.

It belongs to the universal ribosomal protein uS9 family.

This is Small ribosomal subunit protein uS9 from Chlamydia abortus (strain DSM 27085 / S26/3) (Chlamydophila abortus).